Reading from the N-terminus, the 1294-residue chain is uncharacterized protein (1294 aa).

This is an uncharacterized protein from Schizosaccharomyces pombe (strain 972 / ATCC 24843) (Fission yeast).